The following is a 341-amino-acid chain: Putative UPF0607 protein ENSP00000381514 (341 aa).

Positions 78 to 89 (AEEPKEATEVKD) are enriched in basic and acidic residues. Disordered stretches follow at residues 78–131 (AEEP…NPRP) and 216–282 (GLLT…KLPC). A compositionally biased stretch (polar residues) spans 108–127 (EAASTSRPLETQGNLTSSWY). Basic residues predominate over residues 243 to 252 (AGHRSRKRKL).

The protein belongs to the UPF0607 family.

This Homo sapiens (Human) protein is Putative UPF0607 protein ENSP00000381514.